The chain runs to 153 residues: MYAVVQVRGVVNTRRDIKETLKMLRLHHINHCVIVPETPEYLGMIRKAKDFVAFGEVDAATLATILTTRGRLTGNKPLTEEYVKSATSYGSIEEFASALVNGEVRMKDVPELKPVLRMHPPRKGYKTTKRTYTQGGALGYYGTEINDLLIKMR.

Belongs to the universal ribosomal protein uL30 family. Part of the 50S ribosomal subunit.

This Methanocorpusculum labreanum (strain ATCC 43576 / DSM 4855 / Z) protein is Large ribosomal subunit protein uL30.